We begin with the raw amino-acid sequence, 1997 residues long: Autophagy-related protein 2 homolog A (1997 aa).

The Chorein N-terminal domain maps to 17–119; that stretch reads CRYLLQHYLG…RGAAQGTESQ (103 aa). 5 disordered regions span residues 241-281, 1292-1323, 1371-1414, 1492-1534, and 1684-1718; these read TSVQ…IQQI, HCPPKPEPPTEIAGQKLQPPEGPSSLPPCLPA, EEIK…TDTD, SSRP…TQGG, and RLDGPAKSSSDCELEQETSQGSTEDETMSPSSSTD. The segment covering 1311–1321 has biased composition (pro residues); sequence PEGPSSLPPCL. Composition is skewed to polar residues over residues 1393 to 1408, 1493 to 1532, and 1690 to 1718; these read RVSQESLGLSDTSGDS, SRPNSARAQSPRSRTSFHNARGSPSRSSVTNRPQNTWRTQ, and KSSSDCELEQETSQGSTEDETMSPSSSTD.

Belongs to the ATG2 family.

The protein localises to the preautophagosomal structure membrane. It is found in the lipid droplet. Its subcellular location is the endoplasmic reticulum membrane. It catalyses the reaction a 1,2-diacyl-sn-glycero-3-phospho-L-serine(in) = a 1,2-diacyl-sn-glycero-3-phospho-L-serine(out). The catalysed reaction is a 1,2-diacyl-sn-glycero-3-phosphoethanolamine(in) = a 1,2-diacyl-sn-glycero-3-phosphoethanolamine(out). Functionally, lipid transfer protein involved in autophagosome assembly. Tethers the edge of the isolation membrane (IM) to the endoplasmic reticulum (ER) and mediates direct lipid transfer from ER to IM for IM expansion. Binds to the ER exit site (ERES), which is the membrane source for autophagosome formation, and extracts phospholipids from the membrane source and transfers them to atg9 (atg9a or atg9b) to the IM for membrane expansion. Also regulates lipid droplets morphology and distribution within the cell. In Xenopus tropicalis (Western clawed frog), this protein is Autophagy-related protein 2 homolog A.